The chain runs to 203 residues: Glycerol-3-phosphate acyltransferase (203 aa).

5 helical membrane passes run 5–25, 55–75, 84–104, 118–138, and 159–179; these read IYIAALVIGYLFGSIPFGLIL, LAAATLLLDALKGTAAVIVAA, IAANAAMLAALGAFLGHLFPV, IGVLIGLFWPAAVVFCIMWLA, and IFLWWFGHDSLASLFAVLTLL.

The protein belongs to the PlsY family. Probably interacts with PlsX.

It localises to the cell inner membrane. The enzyme catalyses an acyl phosphate + sn-glycerol 3-phosphate = a 1-acyl-sn-glycero-3-phosphate + phosphate. It participates in lipid metabolism; phospholipid metabolism. In terms of biological role, catalyzes the transfer of an acyl group from acyl-phosphate (acyl-PO(4)) to glycerol-3-phosphate (G3P) to form lysophosphatidic acid (LPA). This enzyme utilizes acyl-phosphate as fatty acyl donor, but not acyl-CoA or acyl-ACP. This Rhodopseudomonas palustris (strain ATCC BAA-98 / CGA009) protein is Glycerol-3-phosphate acyltransferase.